The following is a 498-amino-acid chain: Ribose import ATP-binding protein RbsA 1 (498 aa).

2 ABC transporter domains span residues 7–243 (LHIQ…VGRR) and 254–496 (PRGE…IGKS). ATP is bound at residue 39–46 (GENGAGKS).

It belongs to the ABC transporter superfamily. Ribose importer (TC 3.A.1.2.1) family. In terms of assembly, the complex is composed of an ATP-binding protein (RbsA), two transmembrane proteins (RbsC) and a solute-binding protein (RbsB).

The protein localises to the cell inner membrane. The catalysed reaction is D-ribose(out) + ATP + H2O = D-ribose(in) + ADP + phosphate + H(+). Its function is as follows. Part of the ABC transporter complex RbsABC involved in ribose import. Responsible for energy coupling to the transport system. The chain is Ribose import ATP-binding protein RbsA 1 from Pasteurella multocida (strain Pm70).